A 236-amino-acid chain; its full sequence is Methylosome subunit pICln (236 aa).

Residue S2 is modified to N-acetylserine. The disordered stretch occupies residues 88 to 109 (EESKEPPSDEDEEDNDDIEPIS). Residues S95, S143, S192, S194, S197, and S209 each carry the phosphoserine modification. The span at 95–107 (SDEDEEDNDDIEP) shows a compositional bias: acidic residues. A Phosphothreonine modification is found at T222.

The protein belongs to the pICln (TC 1.A.47) family. Component of the methylosome, a 20S complex containing at least PRMT5/SKB1, WDR77/MEP50 and CLNS1A/pICln. May mediate SNRPD1 and SNRPD3 methylation. Forms a 6S pICln-Sm complex composed of CLNS1A/pICln, SNRPD1, SNRPD2, SNRPE, SNRPF and SNRPG; ring-like structure where CLNS1A/pICln mimics additional Sm proteins and which is unable to assemble into the core snRNP. Interacts with LSM10 and LSM11.

The protein localises to the cytoplasm. It is found in the cytosol. The protein resides in the nucleus. Its subcellular location is the cytoskeleton. In terms of biological role, involved in both the assembly of spliceosomal snRNPs and the methylation of Sm proteins. Chaperone that regulates the assembly of spliceosomal U1, U2, U4 and U5 small nuclear ribonucleoproteins (snRNPs), the building blocks of the spliceosome, and thereby plays an important role in the splicing of cellular pre-mRNAs. Most spliceosomal snRNPs contain a common set of Sm proteins SNRPB, SNRPD1, SNRPD2, SNRPD3, SNRPE, SNRPF and SNRPG that assemble in a heptameric protein ring on the Sm site of the small nuclear RNA to form the core snRNP (Sm core). In the cytosol, the Sm proteins SNRPD1, SNRPD2, SNRPE, SNRPF and SNRPG are trapped in an inactive 6S pICln-Sm complex by the chaperone CLNS1A that controls the assembly of the core snRNP. Dissociation by the SMN complex of CLNS1A from the trapped Sm proteins and their transfer to an SMN-Sm complex triggers the assembly of core snRNPs and their transport to the nucleus. The polypeptide is Methylosome subunit pICln (Clns1a) (Mus musculus (Mouse)).